The sequence spans 345 residues: Leucine zipper protein 2 (345 aa).

An N-terminal signal peptide occupies residues 1-19 (MKFNAAHYLLPLLPALVLS). Residues 16–211 (LVLSTRQDYE…QMKAMKETVQ (196 aa)) adopt a coiled-coil conformation. A glycan (N-linked (GlcNAc...) asparagine) is linked at Asn-133. The interval 164 to 192 (LRYGKKDLLFKAQQLTELEQKLAVAKNEL) is leucine-zipper. Positions 223–345 (PPLSLMPSNP…GTPAREEKLL (123 aa)) are disordered. Residues 261–277 (GHHDSSQVQATKEESRR) are compositionally biased toward basic and acidic residues. Over residues 298-313 (PQSNSTAESELTTQKL) the composition is skewed to polar residues. Asn-301 is a glycosylation site (N-linked (GlcNAc...) asparagine).

In terms of tissue distribution, expression found only in the brain and spinal cord.

The protein localises to the secreted. The chain is Leucine zipper protein 2 (Luzp2) from Mus musculus (Mouse).